We begin with the raw amino-acid sequence, 599 residues long: Prostaglandin G/H synthase 1 (599 aa).

The signal sequence occupies residues 1-23; that stretch reads MSRSLLLWFLLFLLLLPPLPVLL. One can recognise an EGF-like domain in the interval 31 to 69; it reads PVNPCCYYPCQHQGICVRFGLDRYQCDCTRTGYSGPNCT. 4 disulfide bridges follow: Cys35/Cys46, Cys36/Cys158, Cys40/Cys56, and Cys58/Cys68. 3 N-linked (GlcNAc...) asparagine glycosylation sites follow: Asn67, Asn103, and Asn143. His206 acts as the Proton acceptor in catalysis. Tyr384 acts as the For cyclooxygenase activity in catalysis. His387 contacts heme b. Residues Cys568 and Cys574 are joined by a disulfide bond.

The protein belongs to the prostaglandin G/H synthase family. As to quaternary structure, homodimer. Heme b is required as a cofactor.

The protein localises to the microsome membrane. It is found in the endoplasmic reticulum membrane. The enzyme catalyses (5Z,8Z,11Z,14Z)-eicosatetraenoate + AH2 + 2 O2 = prostaglandin H2 + A + H2O. It catalyses the reaction (5Z,8Z,11Z,14Z)-eicosatetraenoate + 2 O2 = prostaglandin G2. It carries out the reaction prostaglandin G2 + AH2 = prostaglandin H2 + A + H2O. The catalysed reaction is (9Z,12Z)-octadecadienoate + AH2 + O2 = (9R)-hydroxy-(10E,12Z)-octadecadienoate + A + H2O. The enzyme catalyses (9Z,12Z)-octadecadienoate + AH2 + O2 = (9S)-hydroxy-(10E,12Z)-octadecadienoate + A + H2O. It catalyses the reaction (9Z,12Z)-octadecadienoate + AH2 + O2 = (13S)-hydroxy-(9Z,11E)-octadecadienoate + A + H2O. It carries out the reaction (9Z,12Z)-octadecadienoate + AH2 + O2 = (13R)-hydroxy-(9Z,11E)-octadecadienoate + A + H2O. It participates in lipid metabolism; prostaglandin biosynthesis. Its activity is regulated as follows. The cyclooxygenase activity is inhibited by nonsteroidal anti-inflammatory drugs (NSAIDs) including ibuprofen, flurbiprofen, ketoprofen, naproxen, flurbiprofen, anirolac, fenclofenac and diclofenac. In terms of biological role, dual cyclooxygenase and peroxidase that plays an important role in the biosynthesis pathway of prostanoids, a class of C20 oxylipins mainly derived from arachidonate ((5Z,8Z,11Z,14Z)-eicosatetraenoate, AA, C20:4(n-6)), with a particular role in the inflammatory response. The cyclooxygenase activity oxygenates AA to the hydroperoxy endoperoxide prostaglandin G2 (PGG2), and the peroxidase activity reduces PGG2 to the hydroxy endoperoxide prostaglandin H2 (PGH2), the precursor of all 2-series prostaglandins and thromboxanes. This complex transformation is initiated by abstraction of hydrogen at carbon 13 (with S-stereochemistry), followed by insertion of molecular O2 to form the endoperoxide bridge between carbon 9 and 11 that defines prostaglandins. The insertion of a second molecule of O2 (bis-oxygenase activity) yields a hydroperoxy group in PGG2 that is then reduced to PGH2 by two electrons. Involved in the constitutive production of prostanoids in particular in the stomach and platelets. In gastric epithelial cells, it is a key step in the generation of prostaglandins, such as prostaglandin E2 (PGE2), which plays an important role in cytoprotection. In platelets, it is involved in the generation of thromboxane A2 (TXA2), which promotes platelet activation and aggregation, vasoconstriction and proliferation of vascular smooth muscle cells. Can also use linoleate (LA, (9Z,12Z)-octadecadienoate, C18:2(n-6)) as substrate and produce hydroxyoctadecadienoates (HODEs) in a regio- and stereospecific manner, being (9R)-HODE ((9R)-hydroxy-(10E,12Z)-octadecadienoate) and (13S)-HODE ((13S)-hydroxy-(9Z,11E)-octadecadienoate) its major products. The chain is Prostaglandin G/H synthase 1 from Homo sapiens (Human).